A 467-amino-acid polypeptide reads, in one-letter code: Ribulose bisphosphate carboxylase large chain (467 aa).

Residue Lys6 is modified to N6,N6,N6-trimethyllysine. Asn115 and Thr165 together coordinate substrate. Lys167 serves as the catalytic Proton acceptor. Lys169 lines the substrate pocket. The Mg(2+) site is built by Lys193, Asp195, and Glu196. Lys193 bears the N6-carboxylysine mark. Catalysis depends on His286, which acts as the Proton acceptor. Substrate contacts are provided by Arg287, His319, and Ser371.

The protein belongs to the RuBisCO large chain family. Type I subfamily. Heterohexadecamer of 8 large chains and 8 small chains; disulfide-linked. The disulfide link is formed within the large subunit homodimers. It depends on Mg(2+) as a cofactor. Post-translationally, the disulfide bond which can form in the large chain dimeric partners within the hexadecamer appears to be associated with oxidative stress and protein turnover.

The protein resides in the plastid. It localises to the chloroplast. It carries out the reaction 2 (2R)-3-phosphoglycerate + 2 H(+) = D-ribulose 1,5-bisphosphate + CO2 + H2O. The catalysed reaction is D-ribulose 1,5-bisphosphate + O2 = 2-phosphoglycolate + (2R)-3-phosphoglycerate + 2 H(+). Functionally, ruBisCO catalyzes two reactions: the carboxylation of D-ribulose 1,5-bisphosphate, the primary event in carbon dioxide fixation, as well as the oxidative fragmentation of the pentose substrate in the photorespiration process. Both reactions occur simultaneously and in competition at the same active site. The chain is Ribulose bisphosphate carboxylase large chain from Cedrus atlantica (Atlas cedar).